The sequence spans 354 residues: Rhodopsin (354 aa).

The Extracellular segment spans residues 1-36 (MNGTEGPDFYVPMVNTTGIVRSPYDYPQYYLVNPAA). Residues asparagine 2 and asparagine 15 are each glycosylated (N-linked (GlcNAc...) asparagine). Residues 37-61 (FSMLAAYMFFLILVGFPVNFLTLYV) form a helical membrane-spanning segment. At 62 to 73 (TMEHKKLRTPLN) the chain is on the cytoplasmic side. Residues 74-96 (YILLNLAVANLFMVIGGFTTTMY) form a helical membrane-spanning segment. The Extracellular segment spans residues 97–110 (TSMHGYFVLGRTGC). A disulfide bridge connects residues cysteine 110 and cysteine 187. The chain crosses the membrane as a helical span at residues 111–133 (NLEGFFATLGGEIALWSLVVLAV). The 'Ionic lock' involved in activated form stabilization motif lies at 134–136 (ERW). Topologically, residues 134–152 (ERWVVVCKPISNFRFGENH) are cytoplasmic. The chain crosses the membrane as a helical span at residues 153–173 (AVMGVSFTWLMACACSVPPLF). Residues 174–202 (GWSRYIPEGMQCSCGIDYYTRAPGYNNES) lie on the Extracellular side of the membrane. The helical transmembrane segment at 203 to 224 (FVIYMFVCHFSIPLTIIFFCYG) threads the bilayer. The Cytoplasmic portion of the chain corresponds to 225–252 (RLLCAVKDAAAAQQESETTQRAEREVSR). A helical membrane pass occupies residues 253 to 274 (MVVIMVIGFLICWLPYASVAWF). The Extracellular portion of the chain corresponds to 275-286 (IFTHQGSEFGPV). Residues 287-308 (FMTIPAFFAKSSAIYNPMIYIC) traverse the membrane as a helical segment. Lysine 296 carries the post-translational modification N6-(retinylidene)lysine. Residues 309–354 (MNKQFRHCMITTLCCGKNPFEEEEGASTTASKTEASSVSSSHVSPA) are Cytoplasmic-facing. S-palmitoyl cysteine attachment occurs at residues cysteine 322 and cysteine 323. The tract at residues 333-354 (GASTTASKTEASSVSSSHVSPA) is disordered. The segment covering 334 to 354 (ASTTASKTEASSVSSSHVSPA) has biased composition (low complexity).

It belongs to the G-protein coupled receptor 1 family. Opsin subfamily. Post-translationally, phosphorylated on some or all of the serine and threonine residues present in the C-terminal region. In terms of processing, contains one covalently linked retinal chromophore.

It localises to the membrane. It is found in the cell projection. Its subcellular location is the cilium. The protein resides in the photoreceptor outer segment. Its function is as follows. Photoreceptor required for image-forming vision at low light intensity. While most salt water fish species use retinal as chromophore, most freshwater fish use 3-dehydroretinal, or a mixture of retinal and 3-dehydroretinal. Light-induced isomerization of 11-cis to all-trans retinal triggers a conformational change that activates signaling via G-proteins. Subsequent receptor phosphorylation mediates displacement of the bound G-protein alpha subunit by arrestin and terminates signaling. This is Rhodopsin (rho) from Zeus faber (John Dory).